Reading from the N-terminus, the 777-residue chain is Serine/threonine-protein kinase PTK2 (777 aa).

The tract at residues 21 to 174 (NKLRGNNDST…ISSGSASSTN (154 aa)) is disordered. Low complexity predominate over residues 30-41 (TPAAAPAPVPTK). Composition is skewed to polar residues over residues 50 to 61 (AHISRSASTNTP) and 83 to 133 (RRST…SQHM). The segment covering 149–172 (SSVRGSSYSRHGSGSHISSGSASS) has biased composition (low complexity). The region spanning 222 to 529 (DKDNKTIGSG…MEDLFNDPWF (308 aa)) is the Protein kinase domain. ATP-binding positions include 228–236 (IGSGGSSEV) and lysine 252. The active-site Proton acceptor is the aspartate 355. Disordered stretches follow at residues 564–705 (DAHP…EITE) and 728–764 (SVSG…KKVV). Polar residues-rich tracts occupy residues 575–592 (TDTN…AGTH) and 648–672 (TNTT…TNEF). A compositionally biased stretch (low complexity) spans 677–694 (NATTTDNDNVNTKATTAD). Residues 744–756 (NRSIHSNATSTGT) are compositionally biased toward polar residues.

It belongs to the protein kinase superfamily. Ser/Thr protein kinase family.

The catalysed reaction is L-seryl-[protein] + ATP = O-phospho-L-seryl-[protein] + ADP + H(+). It catalyses the reaction L-threonyl-[protein] + ATP = O-phospho-L-threonyl-[protein] + ADP + H(+). The chain is Serine/threonine-protein kinase PTK2 (PTK2) from Candida glabrata (strain ATCC 2001 / BCRC 20586 / JCM 3761 / NBRC 0622 / NRRL Y-65 / CBS 138) (Yeast).